Reading from the N-terminus, the 466-residue chain is Asparagine--tRNA ligase (466 aa).

The protein belongs to the class-II aminoacyl-tRNA synthetase family. As to quaternary structure, homodimer.

It is found in the cytoplasm. The enzyme catalyses tRNA(Asn) + L-asparagine + ATP = L-asparaginyl-tRNA(Asn) + AMP + diphosphate + H(+). The chain is Asparagine--tRNA ligase from Shewanella oneidensis (strain ATCC 700550 / JCM 31522 / CIP 106686 / LMG 19005 / NCIMB 14063 / MR-1).